A 363-amino-acid chain; its full sequence is Dihydroorotate dehydrogenase (quinone) (363 aa).

Residues 62–66 (AGYDK) and Thr86 contribute to the FMN site. A substrate-binding site is contributed by Lys66. 111–115 (NRLGF) lines the substrate pocket. 2 residues coordinate FMN: Asn140 and Asn171. Asn171 provides a ligand contact to substrate. The active-site Nucleophile is Ser174. Asn176 is a binding site for substrate. FMN contacts are provided by Lys216 and Ser244. 245 to 246 (NT) serves as a coordination point for substrate. Residues Gly267, Gly296, and 317-318 (YS) contribute to the FMN site.

This sequence belongs to the dihydroorotate dehydrogenase family. Type 2 subfamily. As to quaternary structure, monomer. It depends on FMN as a cofactor.

It is found in the cell membrane. It catalyses the reaction (S)-dihydroorotate + a quinone = orotate + a quinol. It participates in pyrimidine metabolism; UMP biosynthesis via de novo pathway; orotate from (S)-dihydroorotate (quinone route): step 1/1. Functionally, catalyzes the conversion of dihydroorotate to orotate with quinone as electron acceptor. In Allorhizobium ampelinum (strain ATCC BAA-846 / DSM 112012 / S4) (Agrobacterium vitis (strain S4)), this protein is Dihydroorotate dehydrogenase (quinone).